A 168-amino-acid polypeptide reads, in one-letter code: Ribosome-binding factor A (168 aa).

The span at 125 to 138 shows a compositional bias: basic and acidic residues; the sequence is RVREGAKHAGDSDP. Residues 125 to 168 are disordered; it reads RVREGAKHAGDSDPYRVLGEGDLEGPATGGPDVEDEGGANSHDR.

This sequence belongs to the RbfA family. As to quaternary structure, monomer. Binds 30S ribosomal subunits, but not 50S ribosomal subunits or 70S ribosomes.

The protein localises to the cytoplasm. One of several proteins that assist in the late maturation steps of the functional core of the 30S ribosomal subunit. Associates with free 30S ribosomal subunits (but not with 30S subunits that are part of 70S ribosomes or polysomes). Required for efficient processing of 16S rRNA. May interact with the 5'-terminal helix region of 16S rRNA. The protein is Ribosome-binding factor A of Mycolicibacterium gilvum (strain PYR-GCK) (Mycobacterium gilvum (strain PYR-GCK)).